The sequence spans 530 residues: MNATAQALVLPFITQVTRAVSLSENVKVLGGIPFAEDGTYLEWLSILGFTIGCYYVIYTFYALCFHPLRKYPGPWHLAVSNIPNRWSTISGNSSYWLYDLHEKYGPIVRVAPNEISYSDPQAWQDIYGPQPNQRLGMPKDPKFFSSFEDKKTAASIITSQPKDYMRMRHIYSYGFSKQVMLAKEEMIQGIIDRAMEALRQTKQQPQDIVQIFRATDFSIVTEIVFGKAYHIFDRPTYQPWFKSLMGWIRSTAVITATTDYPLGKLAAWLLTPRSVLKQRNVYLKYVNGEIEERIGESNAGRKDVVQLMFETTDQPKLAESDIRANLPFMVIAASETTTTLMSGMIAHLLNSPDALSQLTAEVRGRFRSPSDITIATVNNLPFLNACVNEALRVYPAAPTQLPRVVPGEGATVCNRWVPGGTKVYVAPYATFRSAENFYQPDAFLPQRWLPENGESFDVDKKNAWRPFGLGAHECPGQVITNLITRLIMCKLLLSFDLELCADSQDWLSRQPVWIVWDKPELLIKARPAAA.

N-linked (GlcNAc...) asparagine glycosylation occurs at N2. Residues 43-63 (WLSILGFTIGCYYVIYTFYAL) form a helical membrane-spanning segment. N-linked (GlcNAc...) asparagine glycosylation occurs at N92. C474 provides a ligand contact to heme.

This sequence belongs to the cytochrome P450 family. Requires heme as cofactor.

It is found in the membrane. It catalyses the reaction asperaculane E + reduced [NADPH--hemoprotein reductase] + O2 = asperaculane G + oxidized [NADPH--hemoprotein reductase] + H2O + H(+). The catalysed reaction is asperaculane G + reduced [NADPH--hemoprotein reductase] + O2 = aculene D + oxidized [NADPH--hemoprotein reductase] + CO2 + 2 H2O. It carries out the reaction asperaculane E + 2 reduced [NADPH--hemoprotein reductase] + 2 O2 = aculene D + 2 oxidized [NADPH--hemoprotein reductase] + CO2 + 3 H2O + H(+). Its pathway is secondary metabolite biosynthesis. Cytochrome P450 monooxygenase; part of the gene cluster that mediates the biosynthesis of aculenes, a unique type of norsesquiterpenes that contain a nordaucane skeleton linked to an L-proline moiety and are of mixed biosynthetic origin. The pathway begins with the synthesis of dauca-4,7-diene by the terpene cyclase aneC using farnesyl pyrophosphate (FPP) as substrate. The cytochrome P450 monooxygenase aneF then performs the initial oxidation at C-12 of dauca-4,7-diene to yield asperaculane D. Asperaculane D is substrate of the cytochrome P450 monooxygenase aneD for C-10 hydroxylation to yield asperaculane E. The cytochrome P450 monooxygenase aneG then converts asperaculane E into aculene D via C-2 oxidation. The monomodular nonribosomal peptide synthtase aneB adenylates L-proline and the thiohydrolase aneE transfers this activated L-proline derivative to aculenes D and C to produce respectively aculenes B and A. The dioxygenase aneA converts aculene D into aculene C, and aculene B into aculene A by introducing the 5,6-alkene moiety. Asperculanes A, B, C and F, as well as 14-prolyl asperculane C, might be shunt products of the pathway. The sequence is that of Cytochrome P450 monooxygenase aneG from Aspergillus aculeatus (strain ATCC 16872 / CBS 172.66 / WB 5094).